Reading from the N-terminus, the 145-residue chain is uncharacterized protein (145 aa).

The protein belongs to the methyltransferase superfamily.

Functionally, probable methyltransferase. This is an uncharacterized protein from Schizosaccharomyces pombe (strain 972 / ATCC 24843) (Fission yeast).